Reading from the N-terminus, the 384-residue chain is Autophagy-related protein 25 (384 aa).

2 coiled-coil regions span residues 132-236 and 342-379; these read KETA…RRAS and KKNN…QWKT. The tract at residues 224 to 247 is disordered; it reads ESRLSNMNKRRASPRDDAEAEPKR. The segment covering 236–247 has biased composition (basic and acidic residues); the sequence is SPRDDAEAEPKR.

Belongs to the ADIP family.

The protein localises to the preautophagosomal structure membrane. Functionally, specifically required for selective degradation of peroxisomes via macropexophagy. This chain is Autophagy-related protein 25 (ATG25), found in Pichia angusta (Yeast).